We begin with the raw amino-acid sequence, 214 residues long: Adenylate kinase (214 aa).

Gly10 to Thr15 contacts ATP. Residues Ser30 to Val59 form an NMP region. AMP is bound by residues Thr31, Arg36, Gln57–Val59, Gly85–Arg88, and Gln92. The segment at Gly122 to Asp159 is LID. ATP contacts are provided by residues Arg123 and Thr132–Tyr133. AMP-binding residues include Arg156 and Arg167. Gln200 serves as a coordination point for ATP.

Belongs to the adenylate kinase family. In terms of assembly, monomer.

The protein localises to the cytoplasm. The catalysed reaction is AMP + ATP = 2 ADP. It functions in the pathway purine metabolism; AMP biosynthesis via salvage pathway; AMP from ADP: step 1/1. Its function is as follows. Catalyzes the reversible transfer of the terminal phosphate group between ATP and AMP. Plays an important role in cellular energy homeostasis and in adenine nucleotide metabolism. This is Adenylate kinase from Histophilus somni (strain 129Pt) (Haemophilus somnus).